Reading from the N-terminus, the 291-residue chain is 3-hydroxy-5-phosphonooxypentane-2,4-dione thiolase (291 aa).

Residue Lys-203 is the Schiff-base intermediate with substrate of the active site.

This sequence belongs to the DeoC/FbaB aldolase family. Homodecamer.

It localises to the cytoplasm. It carries out the reaction dihydroxyacetone phosphate + acetyl-CoA = 3-hydroxy-2,4-dioxopentyl phosphate + CoA. Involved in the degradation of phospho-AI-2, thereby terminating induction of the lsr operon and closing the AI-2 signaling cycle. Catalyzes the transfer of an acetyl moiety from 3-hydroxy-5-phosphonooxypentane-2,4-dione to CoA to form glycerone phosphate and acetyl-CoA. The chain is 3-hydroxy-5-phosphonooxypentane-2,4-dione thiolase from Yersinia pestis bv. Antiqua (strain Antiqua).